The following is a 589-amino-acid chain: Aspartate--tRNA ligase (589 aa).

Glu-174 is a binding site for L-aspartate. Positions 198–201 are aspartate; sequence QLFK. Arg-220 contributes to the L-aspartate binding site. ATP is bound by residues 220–222 and Gln-229; that span reads RDE. His-448 contributes to the L-aspartate binding site. Glu-483 contributes to the ATP binding site. An L-aspartate-binding site is contributed by Arg-490. 535 to 538 contacts ATP; it reads GIDR.

Belongs to the class-II aminoacyl-tRNA synthetase family. Type 1 subfamily. As to quaternary structure, homodimer.

The protein localises to the cytoplasm. It catalyses the reaction tRNA(Asp) + L-aspartate + ATP = L-aspartyl-tRNA(Asp) + AMP + diphosphate. In terms of biological role, catalyzes the attachment of L-aspartate to tRNA(Asp) in a two-step reaction: L-aspartate is first activated by ATP to form Asp-AMP and then transferred to the acceptor end of tRNA(Asp). In Xylella fastidiosa (strain M12), this protein is Aspartate--tRNA ligase.